A 294-amino-acid chain; its full sequence is ATP phosphoribosyltransferase (294 aa).

Belongs to the ATP phosphoribosyltransferase family. Long subfamily. The cofactor is Mg(2+).

The protein resides in the cytoplasm. It carries out the reaction 1-(5-phospho-beta-D-ribosyl)-ATP + diphosphate = 5-phospho-alpha-D-ribose 1-diphosphate + ATP. It functions in the pathway amino-acid biosynthesis; L-histidine biosynthesis; L-histidine from 5-phospho-alpha-D-ribose 1-diphosphate: step 1/9. Feedback inhibited by histidine. Catalyzes the condensation of ATP and 5-phosphoribose 1-diphosphate to form N'-(5'-phosphoribosyl)-ATP (PR-ATP). Has a crucial role in the pathway because the rate of histidine biosynthesis seems to be controlled primarily by regulation of HisG enzymatic activity. The sequence is that of ATP phosphoribosyltransferase from Chlorobium phaeobacteroides (strain DSM 266 / SMG 266 / 2430).